A 1387-amino-acid chain; its full sequence is DNA-directed RNA polymerase subunit beta (1387 aa).

The protein belongs to the RNA polymerase beta chain family. In terms of assembly, the RNAP catalytic core consists of 2 alpha, 1 beta, 1 beta' and 1 omega subunit. When a sigma factor is associated with the core the holoenzyme is formed, which can initiate transcription.

It carries out the reaction RNA(n) + a ribonucleoside 5'-triphosphate = RNA(n+1) + diphosphate. DNA-dependent RNA polymerase catalyzes the transcription of DNA into RNA using the four ribonucleoside triphosphates as substrates. The sequence is that of DNA-directed RNA polymerase subunit beta from Xanthomonas campestris pv. campestris (strain ATCC 33913 / DSM 3586 / NCPPB 528 / LMG 568 / P 25).